The sequence spans 274 residues: Large ribosomal subunit protein uL2 (274 aa).

Positions 223-274 are disordered; sequence VAMNPVDHPHGGGEGRTSGGRHPVSPWGMPTKGFKTRKNKSTDKYIVRRRNK.

This sequence belongs to the universal ribosomal protein uL2 family. As to quaternary structure, part of the 50S ribosomal subunit. Forms a bridge to the 30S subunit in the 70S ribosome.

Functionally, one of the primary rRNA binding proteins. Required for association of the 30S and 50S subunits to form the 70S ribosome, for tRNA binding and peptide bond formation. It has been suggested to have peptidyltransferase activity; this is somewhat controversial. Makes several contacts with the 16S rRNA in the 70S ribosome. The chain is Large ribosomal subunit protein uL2 from Aliivibrio fischeri (strain ATCC 700601 / ES114) (Vibrio fischeri).